Reading from the N-terminus, the 55-residue chain is MAKATTIKIKLLSTADTGFFYVTTKNSRTMTDKMTKTKYDPIARKHVEFKETKIK.

The protein belongs to the bacterial ribosomal protein bL33 family.

In Allorhizobium ampelinum (strain ATCC BAA-846 / DSM 112012 / S4) (Agrobacterium vitis (strain S4)), this protein is Large ribosomal subunit protein bL33.